The chain runs to 662 residues: NADH-ubiquinone oxidoreductase chain 5 (662 aa).

Transmembrane regions (helical) follow at residues 40 to 62, 77 to 99, 112 to 129, 133 to 155, 168 to 190, 200 to 222, 243 to 262, 272 to 294, 301 to 320, 325 to 347, 360 to 382, 408 to 430, 450 to 472, 510 to 529, 609 to 631, and 636 to 658; these read AALSIVAFYEVGLSGSPVSIVIG, LFDSLTVSMLLPVLIVSSLVHLY, RFFSYLSMFTFFMLVLVA, YFIMFVGWEGIGISSYLLINFWY, LTVNRVGDMFLSVGFFAIFWVFG, VAPYINETAITIIGLLLLVGAMA, VSALIHAATLVTAGVYLMLR, TVLVVITWVGALTAFFAATTGLL, VIAYSTCSQMGYLFMAVGLS, ALFHLVNHAFFKALLFLAAGAVI, GGLVNFLPFTYTAILIGSLSLMA, TIAYWLGTISAVFTAFYSFRLVS, APMIIVIPLVILSIMSIVFGYIA, LLPAIGSLFGAGLALYLYHV, GVITSYALYIMLGLVSLIFLVFA, and VFNEYGLSLILVYLSALVLLPSS.

The protein belongs to the complex I subunit 5 family.

It localises to the mitochondrion inner membrane. The enzyme catalyses a ubiquinone + NADH + 5 H(+)(in) = a ubiquinol + NAD(+) + 4 H(+)(out). Core subunit of the mitochondrial membrane respiratory chain NADH dehydrogenase (Complex I) that is believed to belong to the minimal assembly required for catalysis. Complex I functions in the transfer of electrons from NADH to the respiratory chain. The immediate electron acceptor for the enzyme is believed to be ubiquinone. This is NADH-ubiquinone oxidoreductase chain 5 (ND5) from Cryptococcus neoformans var. grubii serotype A (strain H99 / ATCC 208821 / CBS 10515 / FGSC 9487) (Filobasidiella neoformans var. grubii).